The primary structure comprises 668 residues: Metastasis-associated protein MTA2 (668 aa).

One can recognise a BAH domain in the interval 1 to 144; the sequence is MAANMYRVGD…PVQKTLLADQ (144 aa). Residues Ser-52 and Ser-54 each carry the phosphoserine modification. One can recognise an ELM2 domain in the interval 145–256; that stretch reads GEIRVGCKFQ…KAMSTLVPQG (112 aa). Lys-152 bears the N6-acetyllysine mark. The region spanning 263–315 is the SANT domain; that stretch reads DEMEEWSASEAMLFEEALEKYGKDFNDIRQDFLPWKSLASIVQFYYMWKTTDR. The GATA-type; atypical zinc finger occupies 367-394; the sequence is CESCHTTQSAQWYAWGPPNMQCRLCASC. The disordered stretch occupies residues 412-437; that stretch reads GAARGTTEPHSRGHLSRPEAQSLSPY. 2 positions are modified to phosphoserine: Ser-433 and Ser-435. Lys-460 is subject to N6-acetyllysine. Lys-492 is covalently cross-linked (Glycyl lysine isopeptide (Lys-Gly) (interchain with G-Cter in SUMO2 and SUMO3); alternate). Lys-492 participates in a covalent cross-link: Glycyl lysine isopeptide (Lys-Gly) (interchain with G-Cter in SUMO2); alternate. A Glycyl lysine isopeptide (Lys-Gly) (interchain with G-Cter in SUMO2) cross-link involves residue Lys-508. An N6-acetyllysine mark is found at Lys-522 and Lys-531. Thr-534 is subject to Phosphothreonine. Glycyl lysine isopeptide (Lys-Gly) (interchain with G-Cter in SUMO2) cross-links involve residues Lys-559 and Lys-595. Disordered regions lie at residues 580–599 and 647–668; these read ASGIRSSSQPAAKRQKLNPA and PPVPLPASSHPASTNEPIVLED.

The protein belongs to the metastasis-associated protein family. Component of the nucleosome remodeling and deacetylase (NuRD) repressor complex, composed of core proteins MTA1, MTA2, MTA3, RBBP4, RBBP7, HDAC1, HDAC2, MBD2, MBD3, and peripherally associated proteins CDK2AP1, CDK2AP2, GATAD2A, GATAD2B, CHD3, CHD4 and CHD5. The exact stoichiometry of the NuRD complex is unknown, and some subunits such as MBD2 and MBD3, GATAD2A and GATAD2B, and CHD3, CHD4 and CHD5 define mutually exclusive NuRD complexes. Interacts with CHD3. Interacts with CHD4. Interacts with GATAD2A. Interacts with HDAC7. Interacts with MBD3. Interacts with p53/TP53. Interacts with MINT. Interacts with PIMREG. Interacts with NACC2. Interacts with ERCC6. Interacts with PWWP2B. Interacts with transcription factor BCL11A.

The protein resides in the nucleus. May function as a transcriptional coregulator. Acts as a component of the histone deacetylase NuRD complex which participates in the remodeling of chromatin. This Mus musculus (Mouse) protein is Metastasis-associated protein MTA2 (Mta2).